The following is a 223-amino-acid chain: Lipoprotein-releasing system ATP-binding protein LolD (223 aa).

Residues 1-223 (MAKVFRSGST…DEVEPQSLPA (223 aa)) form the ABC transporter domain. 32–39 (GDSGSGKS) is an ATP binding site.

The protein belongs to the ABC transporter superfamily. Lipoprotein translocase (TC 3.A.1.125) family. The complex is composed of two ATP-binding proteins (LolD) and two transmembrane proteins (LolC and LolE).

The protein resides in the cell inner membrane. Functionally, part of the ABC transporter complex LolCDE involved in the translocation of mature outer membrane-directed lipoproteins, from the inner membrane to the periplasmic chaperone, LolA. Responsible for the formation of the LolA-lipoprotein complex in an ATP-dependent manner. The chain is Lipoprotein-releasing system ATP-binding protein LolD from Koribacter versatilis (strain Ellin345).